A 125-amino-acid polypeptide reads, in one-letter code: Small ribosomal subunit protein uS12 (125 aa).

Residues Met-1–Ala-23 are disordered. The residue at position 89 (Asp-89) is a 3-methylthioaspartic acid. Residues Ala-102–Lys-125 form a disordered region. Residues Arg-111–Lys-125 show a composition bias toward basic residues.

The protein belongs to the universal ribosomal protein uS12 family. Part of the 30S ribosomal subunit. Contacts proteins S8 and S17. May interact with IF1 in the 30S initiation complex.

In terms of biological role, with S4 and S5 plays an important role in translational accuracy. Interacts with and stabilizes bases of the 16S rRNA that are involved in tRNA selection in the A site and with the mRNA backbone. Located at the interface of the 30S and 50S subunits, it traverses the body of the 30S subunit contacting proteins on the other side and probably holding the rRNA structure together. The combined cluster of proteins S8, S12 and S17 appears to hold together the shoulder and platform of the 30S subunit. In Halorhodospira halophila (strain DSM 244 / SL1) (Ectothiorhodospira halophila (strain DSM 244 / SL1)), this protein is Small ribosomal subunit protein uS12.